The following is a 29-amino-acid chain: Cytochrome b6-f complex subunit 8 (29 aa).

Residues 3–23 (IVSLGWAFLMVVFSFSLSLVV) form a helical membrane-spanning segment.

This sequence belongs to the PetN family. The 4 large subunits of the cytochrome b6-f complex are cytochrome b6, subunit IV (17 kDa polypeptide, PetD), cytochrome f and the Rieske protein, while the 4 small subunits are PetG, PetL, PetM and PetN. The complex functions as a dimer.

Its subcellular location is the plastid. It localises to the chloroplast thylakoid membrane. Its function is as follows. Component of the cytochrome b6-f complex, which mediates electron transfer between photosystem II (PSII) and photosystem I (PSI), cyclic electron flow around PSI, and state transitions. The chain is Cytochrome b6-f complex subunit 8 from Chlorokybus atmophyticus (Soil alga).